The chain runs to 621 residues: MSEATWWYRGGTSKHDLHYRREAEVNTTLEELLLYFIFLINLCILTFGMVNPHMYYLNKVMSSLFVDTSLPDDERSSFRSIRSITEFWKFMEGPLIDGLYWDSWYGNKQLYSVKNSSRIYYENVLLGIPRVRQLRVRNNTCKVYPAFQSLVSDCYSKYTVENEDFSDFGLKRNPEWTHTPSSRTAPWHWGFVGVYRDGGYIVTLSKSKSETKAKFVDLRLNNWISRGTRAVFIDFSLYNANVNLFCIIRLLAEFPATGGLLTSWQFYSVKLLRYVSYYDYFIASCEVIFCIFLFVFIIQELRKVNEFKSAYFRSVWNWLEMLLLLLCFLAVSFYAYCNMQSFLLLGQLLKNTDSYPDFYFLAYWHIYYNNVIAITIFFAWIKIFKFISFNETMSQLSSTLSRCMKDIVGFAIMFFIIFSAYAQLGFLVFGSQVDDFSTFQNSIFAQFRIVLGDFNFAGIQQANWILGPIYFITFIFFVFFVLLNMFLAIINDTYSEVKADYSIGRRPDFELGKIIQKSCFNVLEKLRLKKAQAKEEKKMQTTDLAQRARRDGFDESEIQEAEQMKRWKERLEKKYYSTEIQDDYQPVTQQEFRELFLYAVELEKELHYVSLKLNQLMRKLH.

The Cytoplasmic segment spans residues 1–31; the sequence is MSEATWWYRGGTSKHDLHYRREAEVNTTLEE. Residues 32-52 form a helical membrane-spanning segment; it reads LLLYFIFLINLCILTFGMVNP. Residues 53-277 are Extracellular-facing; it reads HMYYLNKVMS…SVKLLRYVSY (225 aa). N-linked (GlcNAc...) asparagine glycosylation is found at Asn-115 and Asn-138. A helical transmembrane segment spans residues 278-298; that stretch reads YDYFIASCEVIFCIFLFVFII. Over 299 to 314 the chain is Cytoplasmic; it reads QELRKVNEFKSAYFRS. Residues 315 to 335 traverse the membrane as a helical segment; sequence VWNWLEMLLLLLCFLAVSFYA. The Extracellular portion of the chain corresponds to 336-360; it reads YCNMQSFLLLGQLLKNTDSYPDFYF. Residues 361 to 381 traverse the membrane as a helical segment; it reads LAYWHIYYNNVIAITIFFAWI. Residues 382 to 406 are Cytoplasmic-facing; the sequence is KIFKFISFNETMSQLSSTLSRCMKD. The chain crosses the membrane as a helical span at residues 407-427; it reads IVGFAIMFFIIFSAYAQLGFL. At 428 to 468 the chain is on the extracellular side; the sequence is VFGSQVDDFSTFQNSIFAQFRIVLGDFNFAGIQQANWILGP. Residues 469-489 form a helical membrane-spanning segment; that stretch reads IYFITFIFFVFFVLLNMFLAI. At 490 to 621 the chain is on the cytoplasmic side; it reads INDTYSEVKA…KLNQLMRKLH (132 aa). Residues 521–551 adopt a coiled-coil conformation; the sequence is NVLEKLRLKKAQAKEEKKMQTTDLAQRARRD.

Belongs to the polycystin family. Interacts with TRPC1 and TRPC5. In terms of tissue distribution, expressed only in testis and heart.

The protein localises to the membrane. Exhibits a lower single conductance but no spontaneous channel activity. May function as a regulator of calcium channels or a channel component involving Ca2(+) homeostasis. The protein is Polycystin-2-like protein 2 of Mus musculus (Mouse).